A 291-amino-acid polypeptide reads, in one-letter code: MSIKHPIIVVTGSSGAGTTSVKRTFEQIFYREKVKAAFVEGDSFHRYDRYEMRELMAAEAAKGNKHFSHFSPETNRLDDLAQLFKDYGATGSGRFRHYVHDAGEAKLYNTEPGRFTDWEDLEQGTDILFYEGLHGAVVTDELNLAQHADLKIGVVPVINLEWIQKIHRDKATRGYTTEDVTDTIMRRMPDYVRYICPQFTETDINFQRVPTVDTSNPFVARWIPTPDESMVVIRFRDPHGIDFPYLLSMIHNSFMSRANSIVIPGNKQDLAMQLLLTPLIMKLMDRKRRAG.

12–20 contacts ATP; that stretch reads GSSGAGTTS.

Belongs to the phosphoribulokinase family. Homooctamer.

The enzyme catalyses D-ribulose 5-phosphate + ATP = D-ribulose 1,5-bisphosphate + ADP + H(+). It participates in carbohydrate biosynthesis; Calvin cycle. The polypeptide is Phosphoribulokinase (cbbP) (Xanthobacter flavus).